The following is a 184-amino-acid chain: Inorganic pyrophosphatase (184 aa).

Substrate contacts are provided by K19, R33, and Y45. Positions 55, 60, and 92 each coordinate Mg(2+). Residue Y129 participates in substrate binding.

Belongs to the PPase family. In terms of assembly, homohexamer. Mg(2+) serves as cofactor.

The protein localises to the cytoplasm. The enzyme catalyses diphosphate + H2O = 2 phosphate + H(+). Catalyzes the hydrolysis of inorganic pyrophosphate (PPi) forming two phosphate ions. The protein is Inorganic pyrophosphatase of Mycoplasma pneumoniae (strain ATCC 29342 / M129 / Subtype 1) (Mycoplasmoides pneumoniae).